The chain runs to 865 residues: AdoMet-dependent rRNA methyltransferase SPB1 (865 aa).

Residues Gly-56, Trp-58, Asp-76, Asp-92, and Asp-117 each contribute to the S-adenosyl-L-methionine site. Lys-157 serves as the catalytic Proton acceptor. Coiled-coil stretches lie at residues 358 to 400 and 462 to 492; these read ESMD…VRMQ and GETD…RKAA. 2 disordered regions span residues 370–396 and 443–676; these read LEKL…QKDI and VVAS…TKDG. Positions 386 to 396 are enriched in basic and acidic residues; the sequence is RKENERKQKDI. Residues 463–483 show a composition bias toward acidic residues; the sequence is ETDDESDEELDRLETELDDMY. Basic and acidic residues predominate over residues 484 to 497; it reads DQFRERKAASDAKY. The segment covering 526 to 545 has biased composition (acidic residues); it reads ISDDSELEEESSGDSDDEDD. Residues 556–566 show a composition bias toward polar residues; that stretch reads LDTTPSDNSGL. Residues 600–609 are compositionally biased toward acidic residues; it reads GEDEDADMED. Basic and acidic residues-rich tracts occupy residues 610–627 and 659–676; these read TVSK…ADKK and KSGK…TKDG. A coiled-coil region spans residues 762 to 789; the sequence is REAKGRKKMKAAQRLEKLKKKSDLLVNE.

This sequence belongs to the class I-like SAM-binding methyltransferase superfamily. RNA methyltransferase RlmE family. SPB1 subfamily. In terms of assembly, component of the nucleolar and nucleoplasmic pre-60S ribosomal particle.

The protein localises to the nucleus. Its subcellular location is the nucleolus. It catalyses the reaction a ribonucleotide in rRNA + S-adenosyl-L-methionine = a 2'-O-methylribonucleotide in rRNA + S-adenosyl-L-homocysteine + H(+). Functionally, required for proper assembly of pre-ribosomal particles during the biogenesis of the 60S ribosomal subunit. The protein is AdoMet-dependent rRNA methyltransferase SPB1 of Pyricularia oryzae (strain 70-15 / ATCC MYA-4617 / FGSC 8958) (Rice blast fungus).